Here is a 338-residue protein sequence, read N- to C-terminus: D-erythrose-4-phosphate dehydrogenase (338 aa).

12 to 13 is a binding site for NAD(+); that stretch reads RI. Residues 154 to 156, Arg-200, 213 to 214, and Arg-236 each bind substrate; these read SCT and TK. The Nucleophile role is filled by Cys-155. Asn-318 is a binding site for NAD(+).

It belongs to the glyceraldehyde-3-phosphate dehydrogenase family. Epd subfamily. In terms of assembly, homotetramer.

It localises to the cytoplasm. It catalyses the reaction D-erythrose 4-phosphate + NAD(+) + H2O = 4-phospho-D-erythronate + NADH + 2 H(+). It functions in the pathway cofactor biosynthesis; pyridoxine 5'-phosphate biosynthesis; pyridoxine 5'-phosphate from D-erythrose 4-phosphate: step 1/5. Functionally, catalyzes the NAD-dependent conversion of D-erythrose 4-phosphate to 4-phosphoerythronate. This Yersinia pestis bv. Antiqua (strain Antiqua) protein is D-erythrose-4-phosphate dehydrogenase.